The chain runs to 208 residues: Large ribosomal subunit protein uL3 (208 aa).

Residues 123 to 147 (RHGQSRGPMAHGSRYHRRPGSMGPV) form a disordered region.

The protein belongs to the universal ribosomal protein uL3 family. As to quaternary structure, part of the 50S ribosomal subunit. Forms a cluster with proteins L14 and L19.

Functionally, one of the primary rRNA binding proteins, it binds directly near the 3'-end of the 23S rRNA, where it nucleates assembly of the 50S subunit. This chain is Large ribosomal subunit protein uL3, found in Streptococcus sanguinis (strain SK36).